Consider the following 260-residue polypeptide: DNA repair protein RecO (260 aa).

This sequence belongs to the RecO family.

Its function is as follows. Involved in DNA repair and RecF pathway recombination. This is DNA repair protein RecO from Paracidovorax citrulli (strain AAC00-1) (Acidovorax citrulli).